The sequence spans 236 residues: Syntaxin-8 (236 aa).

At 1-215 the chain is on the cytoplasmic side; the sequence is MAPDPWFSTY…LVDRKSTSCG (215 aa). Residues 42–65 adopt a coiled-coil conformation; the sequence is LTIRTLLKNLKVKIDLLKDLLLRA. The t-SNARE coiled-coil homology domain maps to 145-207; that stretch reads QKIIQEQDAG…RTEARRVTLV (63 aa). A Phosphoserine modification is found at S160. Residues 216-232 form a helical; Anchor for type IV membrane protein membrane-spanning segment; the sequence is MIMVILLLLVAIVVVAV. At 233 to 236 the chain is on the vesicular side; that stretch reads WPTN.

It belongs to the syntaxin family. As to quaternary structure, forms a SNARE complex with STX7, VTI1B and VAMP8 which functions in the homotypic fusion of late endosomes. Part of the SNARE core complex containing STX7, VAMP8 and VTI1B. Interacts with VAMP8. Interacts with HECTD3. Interacts with TPC1. Ubiquitinated by HECTD3.

It is found in the membrane. Functionally, vesicle trafficking protein that functions in the early secretory pathway, possibly by mediating retrograde transport from cis-Golgi membranes to the ER. The polypeptide is Syntaxin-8 (Stx8) (Mus musculus (Mouse)).